The following is a 350-amino-acid chain: Ferrochelatase (350 aa).

Fe cation contacts are provided by histidine 220 and glutamate 301.

It belongs to the ferrochelatase family.

The protein localises to the cytoplasm. The enzyme catalyses heme b + 2 H(+) = protoporphyrin IX + Fe(2+). The protein operates within porphyrin-containing compound metabolism; protoheme biosynthesis; protoheme from protoporphyrin-IX: step 1/1. Its function is as follows. Catalyzes the ferrous insertion into protoporphyrin IX. In Brucella anthropi (strain ATCC 49188 / DSM 6882 / CCUG 24695 / JCM 21032 / LMG 3331 / NBRC 15819 / NCTC 12168 / Alc 37) (Ochrobactrum anthropi), this protein is Ferrochelatase.